The chain runs to 287 residues: MKPLASLRDIKTRINATKKTSQITKAMEMVSTSKLNRAAKREIVRSYMEKIQEVVANVASRGRSHPMLVSRPVKKTGYLVITSDRGLAGAYNSNVVRLVYPKRSKNAMLPPDEYAIIVIGRVGLSFFRKRNMPVILDITRLPDQPSFADIKEIARKTVGLFADGTFDELYMYYNHYVSAIQQEVTERKLLPLTDFLAENKQRTVYEFEPSQEEILDVLLPQYAESLIYGALLDAKASEHAARMTAMKNATDNANDVIRTLTLSYNRARQAAITQEITEIVAGRNALQ.

Belongs to the ATPase gamma chain family. As to quaternary structure, F-type ATPases have 2 components, CF(1) - the catalytic core - and CF(0) - the membrane proton channel. CF(1) has five subunits: alpha(3), beta(3), gamma(1), delta(1), epsilon(1). CF(0) has three main subunits: a, b and c.

It is found in the cell membrane. Functionally, produces ATP from ADP in the presence of a proton gradient across the membrane. The gamma chain is believed to be important in regulating ATPase activity and the flow of protons through the CF(0) complex. The polypeptide is ATP synthase gamma chain (Geobacillus stearothermophilus (Bacillus stearothermophilus)).